A 444-amino-acid polypeptide reads, in one-letter code: Alanyl-tRNA editing protein Aarsd1 (444 aa).

The Zn(2+) site is built by H109 and H113. S174 carries the post-translational modification Phosphoserine. The Zn(2+) site is built by C209 and H213.

The protein belongs to the class-II aminoacyl-tRNA synthetase family. Alax-L subfamily. Zn(2+) is required as a cofactor.

Its subcellular location is the cytoplasm. Its function is as follows. Functions in trans to edit the amino acid moiety from incorrectly charged tRNA(Ala). This chain is Alanyl-tRNA editing protein Aarsd1 (AARSD1), found in Bos taurus (Bovine).